The sequence spans 117 residues: Large ribosomal subunit protein uL23 (117 aa).

This sequence belongs to the universal ribosomal protein uL23 family. In terms of assembly, part of the 50S ribosomal subunit. Contacts protein L29, and trigger factor when it is bound to the ribosome.

In terms of biological role, one of the early assembly proteins it binds 23S rRNA. One of the proteins that surrounds the polypeptide exit tunnel on the outside of the ribosome. Forms the main docking site for trigger factor binding to the ribosome. This is Large ribosomal subunit protein uL23 from Acetivibrio thermocellus (strain ATCC 27405 / DSM 1237 / JCM 9322 / NBRC 103400 / NCIMB 10682 / NRRL B-4536 / VPI 7372) (Clostridium thermocellum).